The primary structure comprises 88 residues: Large ribosomal subunit protein bL31B (88 aa).

Belongs to the bacterial ribosomal protein bL31 family. Type B subfamily. In terms of assembly, part of the 50S ribosomal subunit.

The chain is Large ribosomal subunit protein bL31B from Corynebacterium efficiens (strain DSM 44549 / YS-314 / AJ 12310 / JCM 11189 / NBRC 100395).